Here is a 160-residue protein sequence, read N- to C-terminus: Surface-adhesin protein E (160 aa).

The N-terminal stretch at 1–15 is a signal peptide; the sequence is MKKIILTLSLGLLTA. Cysteine 16 carries the N-palmitoyl cysteine lipid modification. A lipid anchor (S-diacylglycerol cysteine) is attached at cysteine 16. The interaction with laminin and plasminogen stretch occupies residues 41-68; the sequence is IRLVKNVNYYIDSESIWVDNQEPQIVHF. The tract at residues 84 to 108 is interaction with vitronectin and epithelial cells; the sequence is PKRYARSVRQYKILNCANYHLTQVR.

As to quaternary structure, homodimer. Interacts with host vitronectin, laminin and plasminogen. Can interact with both immobilized and soluble vitronectin.

It localises to the cell outer membrane. The protein resides in the cell surface. In terms of biological role, acts as a multifunctional adhesin involved in direct interactions with host epithelial cells and host proteins, including vitronectin, laminin and plasminogen. In addition, interaction with serum vitronectin plays an important role in bacterial serum resistance, and conversion of plasminogen to plasmin at the cell surface aids in immune evasion and contributes to bacterial virulence. Induces a pro-inflammatory epithelial cell response, leading to interleukin-8 (IL-8) secretion and up-regulation of ICAM1. The chain is Surface-adhesin protein E (pe) from Haemophilus influenzae (strain NTHi 3655).